A 392-amino-acid polypeptide reads, in one-letter code: Lipase (392 aa).

An N-terminal signal peptide occupies residues 1 to 26 (MVSFISISQGVSLCLLVSSMMLGSSA). Residues 27 to 95 (VPVSGKSGSS…GGNLTSIGKR (69 aa)) constitute a propeptide that is removed on maturation. The tract at residues 50-69 (PLISSRCAPPSNKGSKSDLQ) is disordered. 3 cysteine pairs are disulfide-bonded: Cys-152–Cys-391, Cys-163–Cys-166, and Cys-358–Cys-367. The Nucleophile role is filled by Ser-268. The active-site Charge relay system is the Asp-327. Asp-379 lines the Ca(2+) pocket. Residue His-380 is the Charge relay system of the active site.

This sequence belongs to the AB hydrolase superfamily. Lipase family.

It is found in the secreted. The protein localises to the extracellular space. It carries out the reaction a triacylglycerol + H2O = a diacylglycerol + a fatty acid + H(+). Its activity is regulated as follows. Lipase activity is maximal at a lipid-water interface (interfacial activation), probably by an induced conformational change that results in an increased accessibility of the active site to the substrate. Hydrolyzes ester bonds of triglycerides as well as of their derived partial glycerides with a strong 1,3-positional specificity. This Rhizopus niveus protein is Lipase.